The following is a 491-amino-acid chain: Protein nucleotidyltransferase YdiU (491 aa).

ATP-binding residues include glycine 88, glycine 90, arginine 91, lysine 111, aspartate 123, glycine 124, arginine 174, and arginine 181. Residue aspartate 250 is the Proton acceptor of the active site. The Mg(2+) site is built by asparagine 251 and aspartate 260. ATP is bound at residue aspartate 260.

Belongs to the SELO family. The cofactor is Mg(2+). Requires Mn(2+) as cofactor.

The enzyme catalyses L-seryl-[protein] + ATP = 3-O-(5'-adenylyl)-L-seryl-[protein] + diphosphate. The catalysed reaction is L-threonyl-[protein] + ATP = 3-O-(5'-adenylyl)-L-threonyl-[protein] + diphosphate. It catalyses the reaction L-tyrosyl-[protein] + ATP = O-(5'-adenylyl)-L-tyrosyl-[protein] + diphosphate. It carries out the reaction L-histidyl-[protein] + UTP = N(tele)-(5'-uridylyl)-L-histidyl-[protein] + diphosphate. The enzyme catalyses L-seryl-[protein] + UTP = O-(5'-uridylyl)-L-seryl-[protein] + diphosphate. The catalysed reaction is L-tyrosyl-[protein] + UTP = O-(5'-uridylyl)-L-tyrosyl-[protein] + diphosphate. Nucleotidyltransferase involved in the post-translational modification of proteins. It can catalyze the addition of adenosine monophosphate (AMP) or uridine monophosphate (UMP) to a protein, resulting in modifications known as AMPylation and UMPylation. This chain is Protein nucleotidyltransferase YdiU, found in Bradyrhizobium sp. (strain BTAi1 / ATCC BAA-1182).